The chain runs to 406 residues: MTFPVEKVRADFPILQREVNGLPLAYLDSAASAQKPNQVIDAESAFYRHGYAAVHRGIHTLSAQATESMENVRKQASRFINARSAEELVFVRGTTEGINLVANSWGAENIRAGDNIIISEMEHHANIVPWQMLCERKGAELRVIPLHPDGTLRLETLAALFDDRTRLLAITHVSNVLGTENPLPDMIALARQHGAKVLVDGAQAVMHHAVDVQALDCDFYVFSGHKLYGPTGIGILYVKEALLQEMPPWEGGGSMISTVSLTQGTTWAKAPWRFEAGTPNTGGIIGLGAAIDYVTSLGLDKIGDYEQMLMRYALEQLAQVPDITLYGPAQRLGVIAFNLGKHHAYDVGSFLDNYGIAVRTGHHCAMPLMAWYGVPAMCRASLAMYNTHEEVDRLVAGLTRIHRLLG.

The residue at position 226 (K226) is an N6-(pyridoxal phosphate)lysine. The active-site Cysteine persulfide intermediate is the C364.

The protein belongs to the class-V pyridoxal-phosphate-dependent aminotransferase family. Csd subfamily. As to quaternary structure, homodimer. Interacts with SufE and the SufBCD complex composed of SufB, SufC and SufD. The interaction with SufE is required to mediate the direct transfer of the sulfur atom from the S-sulfanylcysteine. Pyridoxal 5'-phosphate is required as a cofactor.

It localises to the cytoplasm. It catalyses the reaction (sulfur carrier)-H + L-cysteine = (sulfur carrier)-SH + L-alanine. The catalysed reaction is L-selenocysteine + AH2 = hydrogenselenide + L-alanine + A + H(+). It participates in cofactor biosynthesis; iron-sulfur cluster biosynthesis. Cysteine desulfurases mobilize the sulfur from L-cysteine to yield L-alanine, an essential step in sulfur metabolism for biosynthesis of a variety of sulfur-containing biomolecules. Component of the suf operon, which is activated and required under specific conditions such as oxidative stress and iron limitation. Acts as a potent selenocysteine lyase in vitro, that mobilizes selenium from L-selenocysteine. Selenocysteine lyase activity is however unsure in vivo. This chain is Cysteine desulfurase, found in Salmonella gallinarum (strain 287/91 / NCTC 13346).